The sequence spans 246 residues: Probable transcriptional regulatory protein YebC (246 aa).

Residues 1–20 (MAGHSKWANTRHRKAAQDAK) form a disordered region.

It belongs to the TACO1 family.

Its subcellular location is the cytoplasm. This is Probable transcriptional regulatory protein YebC from Shigella boydii serotype 4 (strain Sb227).